Here is a 393-residue protein sequence, read N- to C-terminus: Arginine--pyruvate transaminase AruH (393 aa).

An N6-(pyridoxal phosphate)lysine modification is found at lysine 237.

This sequence belongs to the class-I pyridoxal-phosphate-dependent aminotransferase family. In terms of assembly, homodimer. The cofactor is pyridoxal 5'-phosphate.

It catalyses the reaction L-arginine + pyruvate = 5-guanidino-2-oxopentanoate + L-alanine. Its pathway is amino-acid degradation; L-arginine degradation. Catalyzes the conversion of L-arginine into 2-ketoarginine via transamination. L-arginine is the best substrate, but it can also use L-lysine, L-methionine, L-leucine, ornithine and L-glutamine, which indicates that it may have a broader physiological function in amino acid catabolism. In Pseudomonas aeruginosa (strain ATCC 15692 / DSM 22644 / CIP 104116 / JCM 14847 / LMG 12228 / 1C / PRS 101 / PAO1), this protein is Arginine--pyruvate transaminase AruH (aruH).